We begin with the raw amino-acid sequence, 244 residues long: DNA polymerase sliding clamp (244 aa).

Belongs to the PCNA family. In terms of assembly, homotrimer. The subunits circularize to form a toroid; DNA passes through its center. Replication factor C (RFC) is required to load the toroid on the DNA.

In terms of biological role, sliding clamp subunit that acts as a moving platform for DNA processing. Responsible for tethering the catalytic subunit of DNA polymerase and other proteins to DNA during high-speed replication. The chain is DNA polymerase sliding clamp from Methanothrix thermoacetophila (strain DSM 6194 / JCM 14653 / NBRC 101360 / PT) (Methanosaeta thermophila).